A 133-amino-acid chain; its full sequence is Late embryogenesis abundant protein B19.3 (133 aa).

The segment at 1–133 (MASGQQERSE…IDESKFKTKS (133 aa)) is disordered. Composition is skewed to basic and acidic residues over residues 7–19 (ERSELDRMAREGE), 32–102 (EAQE…EMGR), and 113–133 (GGERAAREGIDIDESKFKTKS). Repeat copies occupy residues 24-43 (GGTGGKTLEAQEHLAEGRSR), 44-63 (GGQTRKDQLGEEGYREMGHK), and 64-83 (GGETRKEQLGEEGYREMGHK). Residues 24 to 83 (GGTGGKTLEAQEHLAEGRSRGGQTRKDQLGEEGYREMGHKGGETRKEQLGEEGYREMGHK) form a 3 X 20 AA tandem repeats region.

It belongs to the small hydrophilic plant seed protein family.

Its function is as follows. Lea proteins are late embryonic proteins abundant in higher plant seed embryos. This chain is Late embryogenesis abundant protein B19.3 (B19.3), found in Hordeum vulgare (Barley).